Reading from the N-terminus, the 657-residue chain is THO complex subunit 1 (657 aa).

Residue methionine 1 is modified to N-acetylmethionine. Serine 2 is modified (phosphoserine). Position 4 is a phosphothreonine (threonine 4). Lysine 31 participates in a covalent cross-link: Glycyl lysine isopeptide (Lys-Gly) (interchain with G-Cter in SUMO2). Residue lysine 133 is modified to N6-acetyllysine. The dock domain; interaction with THOC2 stretch occupies residues 133 to 167 (KNYLLRMCNDLLRRLSKSQNTVFCGRIQLFLARLF). The segment at 194 to 222 (QESTLGQKHTEDREEGMDVEEGEMGDEEA) is disordered. The span at 206-222 (REEGMDVEEGEMGDEEA) shows a compositional bias: acidic residues. The interval 227 to 397 (SIPIDYNLYR…WNSWKNEGCP (171 aa)) is dock domain; interaction with THOC2. Lysine 300 carries the N6-acetyllysine modification. A Glycyl lysine isopeptide (Lys-Gly) (interchain with G-Cter in SUMO2) cross-link involves residue lysine 408. Residues 414–430 (RKRTAPEDFLGKGPTKK) carry the Nuclear localization signal motif. Positions 533-569 (LPPPSEEIKTGEDEDEEDNDALLKENESPDVRRDKPV) are disordered. Serine 537 carries the phosphoserine modification. Threonine 542 bears the Phosphothreonine mark. Residues 553 to 569 (ALLKENESPDVRRDKPV) are compositionally biased toward basic and acidic residues. At serine 560 the chain carries Phosphoserine. Positions 570 to 653 (TGEQIEVFAN…DLAESLTNDN (84 aa)) constitute a Death domain. Lysine 580 participates in a covalent cross-link: Glycyl lysine isopeptide (Lys-Gly) (interchain with G-Cter in SUMO2). A Glycyl lysine isopeptide (Lys-Gly) (interchain with G-Cter in SUMO1); alternate cross-link involves residue lysine 595. Lysine 595 participates in a covalent cross-link: Glycyl lysine isopeptide (Lys-Gly) (interchain with G-Cter in SUMO2); alternate.

This sequence belongs to the THOC1 family. Component of the THO subcomplex, which is composed of THOC1, THOC2, THOC3, THOC5, THOC6 and THOC7. The THO subcomplex interacts with DDX39B to form the THO-DDX39B complex which multimerizes into a 28-subunit tetrameric assembly. Component of the transcription/export (TREX) complex at least composed of ALYREF/THOC4, DDX39B, SARNP/CIP29, CHTOP and the THO subcomplex; in the complex interacts with THOC2, THOC5 and THOC7. TREX seems to have a dynamic structure involving ATP-dependent remodeling. Binds to the hypophosphorylated form of RB1. Interacts with RNA polymerase II. Interacts with LUZP4. Post-translationally, expression is altered specifically during apoptosis and is accompanied by the appearance of novel forms with smaller apparent molecular mass. In terms of processing, polyubiquitinated, leading to proteasomal degradation; probably involves NEDD4. As to expression, ubiquitous. Expressed in various cancer cell lines. Expressed at very low levels in normal breast epithelial cells and highly expressed in breast tumors. Expression is strongly associated with an aggressive phenotype of breast tumors and expression correlates with tumor size and the metastatic state of the tumor progression.

It localises to the nucleus speckle. Its subcellular location is the nucleus. It is found in the nucleoplasm. The protein localises to the nucleus matrix. The protein resides in the cytoplasm. Its function is as follows. Component of the THO subcomplex of the TREX complex which is thought to couple mRNA transcription, processing and nuclear export, and which specifically associates with spliced mRNA and not with unspliced pre-mRNA. Required for efficient export of polyadenylated RNA. The THOC1-THOC2-THOC3 core complex alone is sufficient to bind export factor NXF1-NXT1 and promote ATPase activity of DDX39B/UAP56. TREX is recruited to spliced mRNAs by a transcription-independent mechanism, binds to mRNA upstream of the exon-junction complex (EJC) and is recruited in a splicing- and cap-dependent manner to a region near the 5' end of the mRNA where it functions in mRNA export to the cytoplasm via the TAP/NXF1 pathway. Regulates transcriptional elongation of a subset of genes. Involved in genome stability by preventing co-transcriptional R-loop formation. May play a role in hair cell formation, hence may be involved in hearing. Functionally, participates in an apoptotic pathway which is characterized by activation of caspase-6, increases in the expression of BAK1 and BCL2L1 and activation of NF-kappa-B. This pathway does not require p53/TP53, nor does the presence of p53/TP53 affect the efficiency of cell killing. Activates a G2/M cell cycle checkpoint prior to the onset of apoptosis. Apoptosis is inhibited by association with RB1. (Microbial infection) The TREX complex is essential for the export of Kaposi's sarcoma-associated herpesvirus (KSHV) intronless mRNAs and infectious virus production. The sequence is that of THO complex subunit 1 (THOC1) from Homo sapiens (Human).